The chain runs to 119 residues: Small ribosomal subunit protein uS13 (119 aa).

The segment at 96–119 (PVRGQRTKTNARTRKGPRKLIKSR) is disordered.

It belongs to the universal ribosomal protein uS13 family. In terms of assembly, part of the 30S ribosomal subunit. Forms a loose heterodimer with protein S19. Forms two bridges to the 50S subunit in the 70S ribosome.

Functionally, located at the top of the head of the 30S subunit, it contacts several helices of the 16S rRNA. In the 70S ribosome it contacts the 23S rRNA (bridge B1a) and protein L5 of the 50S subunit (bridge B1b), connecting the 2 subunits; these bridges are implicated in subunit movement. Contacts the tRNAs in the A and P-sites. In Buchnera aphidicola subsp. Cinara cedri (strain Cc), this protein is Small ribosomal subunit protein uS13.